We begin with the raw amino-acid sequence, 121 residues long: Large ribosomal subunit protein uL24 (121 aa).

Residues 1 to 30 form a disordered region; that stretch reads MVRIVSKQPRKQRKARYNAPNHTRGRFLSA.

The protein belongs to the universal ribosomal protein uL24 family. In terms of assembly, part of the 50S ribosomal subunit.

Its function is as follows. One of two assembly initiator proteins, it binds directly to the 5'-end of the 23S rRNA, where it nucleates assembly of the 50S subunit. In terms of biological role, located at the polypeptide exit tunnel on the outside of the subunit. This chain is Large ribosomal subunit protein uL24, found in Methanoculleus marisnigri (strain ATCC 35101 / DSM 1498 / JR1).